The chain runs to 270 residues: Expansin-B10 (270 aa).

A signal peptide spans 1–31 (MAVNVRTMWSSMRAQVAMVVALVFLVRGAWC). Asparagine 41 carries an N-linked (GlcNAc...) asparagine glycan. In terms of domain architecture, Expansin-like EG45 spans 70 to 176 (GGGCGYKDVN…RRVKCKYDSK (107 aa)). Cystine bridges form between cysteine 73–cysteine 101, cysteine 104–cysteine 171, and cysteine 109–cysteine 115. An Expansin-like CBD domain is found at 188–269 (NYLALLVKYV…NWKANTAYTA (82 aa)).

The protein belongs to the expansin family. Expansin B subfamily. As to expression, expressed in pollen.

It localises to the secreted. The protein resides in the cell wall. Its subcellular location is the membrane. Functionally, may aid fertilization by loosening the cell wall of the stigma and style, thereby facilitating penetration of the pollen tube. Acts selectively on grass cell walls, which are relatively poor in pectins and xyloglucans and rich in glucuronoarabinoxylans and (1-3),(1-4)-beta-D-glucans, when compared with cell walls of other angiosperms, including other monocots. In Zea mays (Maize), this protein is Expansin-B10 (EXPB10).